A 487-amino-acid polypeptide reads, in one-letter code: E3 ubiquitin-protein ligase RNF8 (487 aa).

Residues 38 to 92 (VTVGRGFGVTYQLVSKICPLMISRNHCILKQNAEGQWTIKDNKSLNGVWLNRERL) form the FHA domain. The interval 68 to 72 (QNAEG) is required for interaction with PIWIL1. Disordered stretches follow at residues 143–176 (MMEK…KSKI) and 182–201 (EPGQ…QPSE). The residue at position 157 (serine 157) is a Phosphoserine. The segment at 405 to 443 (CIICSEYFVEAVTLNCAHSFCSYCINEWMKRKVECPICR) adopts an RING-type zinc-finger fold.

It belongs to the RNF8 family. Homodimer. Forms a E2-E3 ubiquitin ligase complex composed of the RNF8 homodimer and a E2 heterodimer of UBE2N and UBE2V2. Interacts with class III E2s, including UBE2E1, UBE2E2, and UBE2E3 and with UBE2N. Interacts with RXRA. Interacts (via FHA domain) with phosphorylated HERC2 (via C-terminus). Interacts with PIWIL1; leading to sequester RNF8 in the cytoplasm. Interacts with WRAP53/TCAB1. Autoubiquitinated through 'Lys-48' and 'Lys-63' of ubiquitin. 'Lys-63' polyubiquitination is mediated by UBE2N. 'Lys-29'-type polyubiquitination is also observed, but it doesn't require its own functional RING-type zinc finger.

It is found in the nucleus. Its subcellular location is the cytoplasm. It localises to the midbody. The protein resides in the chromosome. The protein localises to the telomere. It catalyses the reaction S-ubiquitinyl-[E2 ubiquitin-conjugating enzyme]-L-cysteine + [acceptor protein]-L-lysine = [E2 ubiquitin-conjugating enzyme]-L-cysteine + N(6)-ubiquitinyl-[acceptor protein]-L-lysine.. It participates in protein modification; protein ubiquitination. Its function is as follows. E3 ubiquitin-protein ligase that plays a key role in DNA damage signaling via 2 distinct roles: by mediating the 'Lys-63'-linked ubiquitination of histones H2A and H2AX and promoting the recruitment of DNA repair proteins at double-strand breaks (DSBs) sites, and by catalyzing 'Lys-48'-linked ubiquitination to remove target proteins from DNA damage sites. Following DNA DSBs, it is recruited to the sites of damage by ATM-phosphorylated MDC1 and catalyzes the 'Lys-63'-linked ubiquitination of histones H2A and H2AX, thereby promoting the formation of TP53BP1 and BRCA1 ionizing radiation-induced foci (IRIF). Also controls the recruitment of UIMC1-BRCC3 (RAP80-BRCC36) and PAXIP1/PTIP to DNA damage sites. Promotes the recruitment of NBN to DNA damage sites by catalyzing 'Lys-6'-linked ubiquitination of NBN. Also recruited at DNA interstrand cross-links (ICLs) sites and catalyzes 'Lys-63'-linked ubiquitination of histones H2A and H2AX, leading to recruitment of FAAP20 and Fanconi anemia (FA) complex, followed by interstrand cross-link repair. H2A ubiquitination also mediates the ATM-dependent transcriptional silencing at regions flanking DSBs in cis, a mechanism to avoid collision between transcription and repair intermediates. Promotes the formation of 'Lys-63'-linked polyubiquitin chains via interactions with the specific ubiquitin-conjugating UBE2N/UBC13 and ubiquitinates non-histone substrates such as PCNA. Substrates that are polyubiquitinated at 'Lys-63' are usually not targeted for degradation. Also catalyzes the formation of 'Lys-48'-linked polyubiquitin chains via interaction with the ubiquitin-conjugating UBE2L6/UBCH8, leading to degradation of substrate proteins such as CHEK2, JMJD2A/KDM4A and KU80/XRCC5: it is still unclear how the preference toward 'Lys-48'- versus 'Lys-63'-linked ubiquitination is regulated but it could be due to RNF8 ability to interact with specific E2 specific ligases. For instance, interaction with phosphorylated HERC2 promotes the association between RNF8 and UBE2N/UBC13 and favors the specific formation of 'Lys-63'-linked ubiquitin chains. Promotes non-homologous end joining (NHEJ) by promoting the 'Lys-48'-linked ubiquitination and degradation the of KU80/XRCC5. Following DNA damage, mediates the ubiquitination and degradation of JMJD2A/KDM4A in collaboration with RNF168, leading to unmask H4K20me2 mark and promote the recruitment of TP53BP1 at DNA damage sites. Following DNA damage, mediates the ubiquitination and degradation of POLD4/p12, a subunit of DNA polymerase delta. In the absence of POLD4, DNA polymerase delta complex exhibits higher proofreading activity. In addition to its function in damage signaling, also plays a role in higher-order chromatin structure by mediating extensive chromatin decondensation. Involved in the activation of ATM by promoting histone H2B ubiquitination, which indirectly triggers histone H4 'Lys-16' acetylation (H4K16ac), establishing a chromatin environment that promotes efficient activation of ATM kinase. Required in the testis, where it plays a role in the replacement of histones during spermatogenesis. At uncapped telomeres, promotes the joining of deprotected chromosome ends by inducing H2A ubiquitination and TP53BP1 recruitment, suggesting that it may enhance cancer development by aggravating telomere-induced genome instability in case of telomeric crisis. Promotes the assembly of RAD51 at DNA DSBs in the absence of BRCA1 and TP53BP1 Also involved in class switch recombination in immune system, via its role in regulation of DSBs repair. May be required for proper exit from mitosis after spindle checkpoint activation and may regulate cytokinesis. May play a role in the regulation of RXRA-mediated transcriptional activity. Not involved in RXRA ubiquitination by UBE2E2. This Bos taurus (Bovine) protein is E3 ubiquitin-protein ligase RNF8.